The following is a 356-amino-acid chain: Glutamine synthetase (356 aa).

A GS beta-grasp domain is found at 26 to 105 (IMAEYVWVDA…VLAECWNAGG (80 aa)). The region spanning 112–356 (FRHDCVKVMD…TKALLQFSLA (245 aa)) is the GS catalytic domain.

The protein belongs to the glutamine synthetase family. Homooctamer.

The protein localises to the cytoplasm. It catalyses the reaction L-glutamate + NH4(+) + ATP = L-glutamine + ADP + phosphate + H(+). This Fusarium solani subsp. phaseoli (Nectria haematococca) protein is Glutamine synthetase (GLN1).